The sequence spans 96 residues: Large ribosomal subunit protein bL21 (96 aa).

This sequence belongs to the bacterial ribosomal protein bL21 family. Part of the 50S ribosomal subunit. Contacts protein L20.

Functionally, this protein binds to 23S rRNA in the presence of protein L20. This chain is Large ribosomal subunit protein bL21, found in Chlorobium phaeobacteroides (strain BS1).